Reading from the N-terminus, the 439-residue chain is MRFQLFYILGLLSVTSLTQAANNLVCYYDSTSYLRQGLAKMHTNELDLALQFCTHLVYGYAGLKSGTLELFSLNVDLDMFYYKDITALRQKFPQLKILLSVGGDRDVDEAHPNKYVELLEANRTAQQNFIDSSMILLKRNGFDGLDLAFQLPRNKPRKVHGSLGTYWKSFKKLFTGDFVVDPLAEQHKSQFTDLVGNIKNAFRSANLMLSLTVLPNVNSTWYFDVPKLHPQFDYINLAAFDFLTPLRNPEEADYTAPIFFQDEQNRLPHLNVEFQVNYWLQNHCPGQKLNLGIASYGRAWKLSKESGLSGAPIVHETCGAAPGGIQIQSAEGLLSWPEICSKLSQNASAQYRGELAPLRKVTDLTQKYGNYALRPADENGDFGVWLSFDDPDFAGIKAVYAKSKGLGGIALFDLSYDDFRGLCTGQKYPIVRSIKYFMG.

Residues 1–20 (MRFQLFYILGLLSVTSLTQA) form the signal peptide. Residues 22-439 (NNLVCYYDST…IVRSIKYFMG (418 aa)) form the GH18 domain. Cysteine 26 and cysteine 53 are joined by a disulfide. Residues asparagine 122, asparagine 218, and asparagine 346 are each glycosylated (N-linked (GlcNAc...) asparagine). A disulfide bridge links cysteine 340 with cysteine 423.

The protein belongs to the glycosyl hydrolase 18 family. IDGF subfamily. Post-translationally, glycosylated.

The protein resides in the secreted. In terms of biological role, cooperates with insulin-like peptides to stimulate the proliferation, polarization and motility of imaginal disk cells. May act by stabilizing the binding of insulin-like peptides to its receptor through a simultaneous interaction with both molecules to form a multiprotein signaling complex. This chain is Chitinase-like protein Idgf1 (Idgf1), found in Drosophila simulans (Fruit fly).